Reading from the N-terminus, the 317-residue chain is Transaldolase (317 aa).

Catalysis depends on Lys126, which acts as the Schiff-base intermediate with substrate.

This sequence belongs to the transaldolase family. Type 1 subfamily. Homodimer.

The protein localises to the cytoplasm. The catalysed reaction is D-sedoheptulose 7-phosphate + D-glyceraldehyde 3-phosphate = D-erythrose 4-phosphate + beta-D-fructose 6-phosphate. It participates in carbohydrate degradation; pentose phosphate pathway; D-glyceraldehyde 3-phosphate and beta-D-fructose 6-phosphate from D-ribose 5-phosphate and D-xylulose 5-phosphate (non-oxidative stage): step 2/3. In terms of biological role, transaldolase is important for the balance of metabolites in the pentose-phosphate pathway. The chain is Transaldolase from Burkholderia multivorans (strain ATCC 17616 / 249).